Reading from the N-terminus, the 419-residue chain is UDP-N-acetylglucosamine 1-carboxyvinyltransferase 2 (419 aa).

24 to 25 (KN) provides a ligand contact to phosphoenolpyruvate. Residue Arg94 coordinates UDP-N-acetyl-alpha-D-glucosamine. Cys118 functions as the Proton donor in the catalytic mechanism. 2-(S-cysteinyl)pyruvic acid O-phosphothioketal is present on Cys118. UDP-N-acetyl-alpha-D-glucosamine-binding positions include 123–127 (RPIDQ), Asp307, and Ile329.

The protein belongs to the EPSP synthase family. MurA subfamily.

It localises to the cytoplasm. It catalyses the reaction phosphoenolpyruvate + UDP-N-acetyl-alpha-D-glucosamine = UDP-N-acetyl-3-O-(1-carboxyvinyl)-alpha-D-glucosamine + phosphate. The protein operates within cell wall biogenesis; peptidoglycan biosynthesis. Functionally, cell wall formation. Adds enolpyruvyl to UDP-N-acetylglucosamine. This is UDP-N-acetylglucosamine 1-carboxyvinyltransferase 2 from Staphylococcus epidermidis (strain ATCC 12228 / FDA PCI 1200).